A 65-amino-acid chain; its full sequence is Large ribosomal subunit protein bL32 (65 aa).

Residues 1-45 (MAVQQNKKTPSKRGMRRAHDVLKKPTFSVDFSSGETHRRHHVTPD) are disordered.

The protein belongs to the bacterial ribosomal protein bL32 family.

This chain is Large ribosomal subunit protein bL32, found in Nitrosococcus oceani (strain ATCC 19707 / BCRC 17464 / JCM 30415 / NCIMB 11848 / C-107).